A 79-amino-acid chain; its full sequence is Cytochrome c oxidase subunit 7A1, mitochondrial (79 aa).

A mitochondrion-targeting transit peptide spans 1 to 21 (MQALRVSRALIRSFNTTARNR). Over 22-46 (FQNRVPEKQKLFQEDNDIPLYLKGG) the chain is Mitochondrial matrix. A helical transmembrane segment spans residues 47-75 (IVDNILYRVTMGLCLGGSAYSMYCLGWAS). Residues 76 to 79 (FPRN) lie on the Mitochondrial intermembrane side of the membrane.

This sequence belongs to the cytochrome c oxidase VIIa family. As to quaternary structure, component of the complex IV (CIV, cytochrome c oxidase), a multisubunit enzyme composed of 14 subunits. The complex is composed of a catalytic core of 3 subunits MT-CO1, MT-CO2 and MT-CO3, encoded in the mitochondrial DNA, and 11 supernumerary subunits COX4I1 (or COX4I2), COX5A, COX5B, COX6A2 (or COX6A1), COX6B1 (or COX6B2), COX6C, COX7A1 (or COX7A2), COX7B, COX7C, COX8B and NDUFA4, which are encoded in the nuclear genome. The complex exists as a monomer or a dimer and forms supercomplexes (SCs) in the inner mitochondrial membrane with NADH-ubiquinone oxidoreductase (complex I, CI) and ubiquinol-cytochrome c oxidoreductase (cytochrome b-c1 complex, complex III, CIII), resulting in different assemblies (supercomplex SCI(1)III(2)IV(1) and megacomplex MCI(2)III(2)IV(2)).

Its subcellular location is the mitochondrion inner membrane. Its pathway is energy metabolism; oxidative phosphorylation. Component of the mitochondrial respiratory complex IV (CIV, also named cytochrome c oxidase complex), the last enzyme in the mitochondrial electron transport chain which drives oxidative phosphorylation. The CIV complex is the component of the respiratory chain that catalyzes the reduction of oxygen to water. Acts as an assembly factor that specifically drives the homodimerization of CIV complexes, mediating the formation of mitochondrial respiratory supercomplexes (respirasomes) containing two CIV: supercomplxes with two molecules of CIV show improved activity. Despite being highly expressed in brown adipose tissue, not required for thermogenesis. The polypeptide is Cytochrome c oxidase subunit 7A1, mitochondrial (COX7A1) (Trachypithecus cristatus (Silvered leaf-monkey)).